A 294-amino-acid chain; its full sequence is NAD kinase (294 aa).

Aspartate 72 functions as the Proton acceptor in the catalytic mechanism. NAD(+) contacts are provided by residues 72-73 (DG), 146-147 (ND), arginine 157, arginine 174, aspartate 176, 187-192 (TAYALS), and glutamine 247.

The protein belongs to the NAD kinase family. It depends on a divalent metal cation as a cofactor.

The protein localises to the cytoplasm. The enzyme catalyses NAD(+) + ATP = ADP + NADP(+) + H(+). Its function is as follows. Involved in the regulation of the intracellular balance of NAD and NADP, and is a key enzyme in the biosynthesis of NADP. Catalyzes specifically the phosphorylation on 2'-hydroxyl of the adenosine moiety of NAD to yield NADP. This is NAD kinase from Saccharophagus degradans (strain 2-40 / ATCC 43961 / DSM 17024).